A 105-amino-acid polypeptide reads, in one-letter code: Keratin-associated protein 17-1 (105 aa).

Interacts with hair keratins.

Functionally, in the hair cortex, hair keratin intermediate filaments are embedded in an interfilamentous matrix, consisting of hair keratin-associated proteins (KRTAP), which are essential for the formation of a rigid and resistant hair shaft through their extensive disulfide bond cross-linking with abundant cysteine residues of hair keratins. The matrix proteins include the high-sulfur and high-glycine-tyrosine keratins. In Homo sapiens (Human), this protein is Keratin-associated protein 17-1 (KRTAP17-1).